Consider the following 504-residue polypeptide: Ribose import ATP-binding protein RbsA (504 aa).

2 consecutive ABC transporter domains span residues Leu-6–Arg-242 and Ile-250–Thr-495. Gly-38–Ser-45 is an ATP binding site.

Belongs to the ABC transporter superfamily. Ribose importer (TC 3.A.1.2.1) family. The complex is composed of an ATP-binding protein (RbsA), two transmembrane proteins (RbsC) and a solute-binding protein (RbsB).

It is found in the cell inner membrane. It carries out the reaction D-ribose(out) + ATP + H2O = D-ribose(in) + ADP + phosphate + H(+). Its function is as follows. Part of the ABC transporter complex RbsABC involved in ribose import. Responsible for energy coupling to the transport system. This chain is Ribose import ATP-binding protein RbsA, found in Aliivibrio fischeri (strain ATCC 700601 / ES114) (Vibrio fischeri).